Reading from the N-terminus, the 343-residue chain is L-rhamnose-proton symporter (343 aa).

The next 10 membrane-spanning stretches (helical) occupy residues 4–24 (AIIL…CFYA), 38–58 (WSIG…YLLL), 68–88 (FSIA…IGNI), 101–121 (MGIG…TPIL), 137–157 (TLLG…AGLL), 175–195 (LILA…MDAA), 207–227 (INSL…GAII), 254–274 (LLIT…LQFF), 289–309 (MSWM…GLLL), and 320–340 (VAVL…VGLG).

This sequence belongs to the L-rhamnose transporter (TC 2.A.7.6) family.

It localises to the cell inner membrane. The enzyme catalyses L-rhamnopyranose(in) + H(+)(in) = L-rhamnopyranose(out) + H(+)(out). Its function is as follows. Uptake of L-rhamnose across the cytoplasmic membrane with the concomitant transport of protons into the cell (symport system). The sequence is that of L-rhamnose-proton symporter from Yersinia pestis bv. Antiqua (strain Antiqua).